Consider the following 285-residue polypeptide: Type II secretion system protein C (285 aa).

Topologically, residues 1-27 (MARLQAFKDPSFHSLVATFRSLPLIRR) are cytoplasmic. Residues 28–48 (FVLGLILLLICQQLAVLTWRF) form a helical membrane-spanning segment. Residues 49-285 (LLPEDSRIVG…DIYLALDGDH (237 aa)) are Periplasmic-facing.

Belongs to the GSP C family.

The protein resides in the cell inner membrane. Functionally, involved in a type II secretion system (T2SS, formerly general secretion pathway, GSP) for the export of proteins. Required for the translocation of the multiple pectic enzymes. This is Type II secretion system protein C (outC) from Pectobacterium carotovorum subsp. carotovorum (Erwinia carotovora subsp. carotovora).